Reading from the N-terminus, the 226-residue chain is UPF0758 protein SAK_1186 (226 aa).

In terms of domain architecture, MPN spans Gln103–Ile225. Residues His174, His176, and Asp187 each coordinate Zn(2+). The JAMM motif motif lies at His174–Asp187.

It belongs to the UPF0758 family.

The sequence is that of UPF0758 protein SAK_1186 from Streptococcus agalactiae serotype Ia (strain ATCC 27591 / A909 / CDC SS700).